Reading from the N-terminus, the 235-residue chain is Phosphoribosylaminoimidazole-succinocarboxamide synthase (235 aa).

The protein belongs to the SAICAR synthetase family.

The catalysed reaction is 5-amino-1-(5-phospho-D-ribosyl)imidazole-4-carboxylate + L-aspartate + ATP = (2S)-2-[5-amino-1-(5-phospho-beta-D-ribosyl)imidazole-4-carboxamido]succinate + ADP + phosphate + 2 H(+). The protein operates within purine metabolism; IMP biosynthesis via de novo pathway; 5-amino-1-(5-phospho-D-ribosyl)imidazole-4-carboxamide from 5-amino-1-(5-phospho-D-ribosyl)imidazole-4-carboxylate: step 1/2. The protein is Phosphoribosylaminoimidazole-succinocarboxamide synthase of Sulfolobus acidocaldarius (strain ATCC 33909 / DSM 639 / JCM 8929 / NBRC 15157 / NCIMB 11770).